The chain runs to 165 residues: Protein SprT (165 aa).

Positions 20–163 (EKLAQANLKL…RCVHCGEQLV (144 aa)) constitute a SprT-like domain. Zn(2+) is bound at residue His78. Glu79 is an active-site residue. His82 lines the Zn(2+) pocket.

It belongs to the SprT family. It depends on Zn(2+) as a cofactor.

It is found in the cytoplasm. The protein is Protein SprT of Escherichia coli O127:H6 (strain E2348/69 / EPEC).